A 164-amino-acid chain; its full sequence is Transcriptional regulator MraZ (164 aa).

SpoVT-AbrB domains lie at 7-60 (HYTN…EIDG) and 83-126 (SEIL…EPGR). The segment at 144–164 (QLSARHAAPDAPPLRSHGARE) is disordered.

The protein belongs to the MraZ family. Forms oligomers.

It is found in the cytoplasm. The protein localises to the nucleoid. This Methylocella silvestris (strain DSM 15510 / CIP 108128 / LMG 27833 / NCIMB 13906 / BL2) protein is Transcriptional regulator MraZ.